A 1764-amino-acid polypeptide reads, in one-letter code: Latent-transforming growth factor beta-binding protein 2 (1764 aa).

The N-terminal stretch at 1–35 is a signal peptide; that stretch reads MRAPTTVRCSGRIQRARWRGFLPLVLALLMGTSHA. The segment at 80 to 140 is disordered; sequence PGLSPSEWNQ…PPAARTAHSV (61 aa). Residues 94–115 form a heparin-binding region; the sequence is IPGRLAEAEARRPSRAQQLRRV. Residues 108–128 are compositionally biased toward polar residues; that stretch reads RAQQLRRVQSPVQTRRSNPRG. N-linked (GlcNAc...) asparagine glycosylation occurs at Asn175. The EGF-like 1 domain maps to 181-213; it reads IKPVCQPPCQNRGSCSRPQLCICRSGFRGARCE. Cystine bridges form between Cys185/Cys195, Cys189/Cys201, and Cys203/Cys212. A disordered region spans residues 220-279; sequence EFDPQNARPVPRRSVEGAPGPHRSSEARGSLVTRIQPLLPPLPPPPSRTLSQTRPLQQHA. The segment at 226-243 is heparin-binding; it reads ARPVPRRSVEGAPGPHRS. Residues 257–266 show a composition bias toward pro residues; that stretch reads LLPPLPPPPS. Residue Asn330 is glycosylated (N-linked (GlcNAc...) asparagine). Residue 331–341 coordinates heparin; sequence LTEKIKKIKVV. In terms of domain architecture, EGF-like 2 spans 383–415; sequence RIYFCQIPCLNGGRCIGRDECWCPANSTGKFCH. 3 cysteine pairs are disulfide-bonded: Cys387/Cys397, Cys391/Cys403, and Cys405/Cys414. Asn408 carries N-linked (GlcNAc...) asparagine glycosylation. The interval 484-529 is disordered; the sequence is EVDPVPEDNSVETRASHRPHGSSGHSHWASNSIPARAGEAPRPPPV. Residue Ser493 is modified to Phosphoserine. Positions 538-590 constitute a TB 1 domain; sequence GQCYLSTVNGQCANPLGELTSQEDCCGSVGTSWGVTSCAPCPPRPAFPVIENG. 3 cysteine pairs are disulfide-bonded: Cys540-Cys562, Cys549-Cys575, and Cys563-Cys578. N-linked (GlcNAc...) asparagine glycosylation occurs at Asn602. The EGF-like 3; calcium-binding domain occupies 608–648; it reads DINECLTLGLCKDSECVNTRGSYLCTCRPGLMLDPSRSRCV. 7 disulfide bridges follow: Cys612–Cys623, Cys618–Cys632, Cys634–Cys647, Cys660–Cys682, Cys669–Cys695, Cys683–Cys698, and Cys684–Cys710. Residues 658 to 710 enclose the TB 2 domain; the sequence is GLCYRSMVSGTCTLPLVQRITKQICCCSRVGKAWGSKCEHCPLPGTEAFREIC. Disordered regions lie at residues 729–759 and 786–809; these read KAEE…RQPL and SAPH…LPGQ. The region spanning 834-876 is the EGF-like 4 domain; the sequence is GFDPCFAGASNICGPGTCVKLPNGYRCVCSPGYQLHPSQDYCT. Intrachain disulfides connect Cys838-Cys851, Cys846-Cys860, Cys862-Cys875, Cys881-Cys892, Cys886-Cys901, Cys903-Cys918, Cys924-Cys935, Cys930-Cys944, Cys946-Cys958, Cys964-Cys975, Cys970-Cys984, Cys987-Cys998, Cys1004-Cys1015, Cys1010-Cys1024, Cys1026-Cys1039, Cys1045-Cys1056, Cys1051-Cys1065, Cys1068-Cys1081, Cys1087-Cys1098, Cys1093-Cys1107, Cys1110-Cys1123, Cys1129-Cys1141, Cys1136-Cys1150, Cys1152-Cys1164, Cys1170-Cys1182, Cys1176-Cys1191, Cys1193-Cys1206, Cys1212-Cys1223, Cys1218-Cys1232, Cys1234-Cys1247, Cys1253-Cys1265, Cys1259-Cys1274, Cys1276-Cys1289, Cys1295-Cys1307, Cys1302-Cys1316, Cys1318-Cys1332, Cys1359-Cys1382, Cys1369-Cys1394, Cys1383-Cys1397, Cys1435-Cys1448, Cys1443-Cys1457, Cys1459-Cys1472, Cys1478-Cys1488, Cys1483-Cys1497, and Cys1499-Cys1512. Residues 877 to 919 enclose the EGF-like 5; calcium-binding domain; the sequence is DDNECLRNPCEGRGRCVNSVGSYSCLCYPGYTLATLGDTQECQ. The 40-residue stretch at 920-959 folds into the EGF-like 6; calcium-binding domain; the sequence is DVDECEQPGVCSGGRCSNTEGSYHCECDQGYVMVRRGHCQ. One can recognise an EGF-like 7; calcium-binding domain in the interval 960 to 999; the sequence is DINECRHPGTCPDGRCVNSPGSYTCLACEEGYIGQSGNCV. The EGF-like 8; calcium-binding domain occupies 1000–1040; it reads DMNECLTPGICAHGRCINMEGSFRCSCEPGYELTPDKKGCR. The region spanning 1041-1082 is the EGF-like 9; calcium-binding domain; that stretch reads DVDECASRASCPTGLCLNTEGSFTCSACQSGYWVNEDGTACE. The EGF-like 10; calcium-binding domain maps to 1083–1124; sequence DLDECAFPGVCPTGVCTNTVGSFSCKDCDRGFRPSPLGNSCE. In terms of domain architecture, EGF-like 11; calcium-binding spans 1125-1165; the sequence is DVDECEGPQNSCLGGECKNTDGSYQCLCPQGFQLANGTVCE. The N-linked (GlcNAc...) asparagine glycan is linked to Asn1160. Positions 1166-1207 constitute an EGF-like 12; calcium-binding domain; the sequence is DVDECVGEEHCAPHGECLNSPGSFFCLCAPGFASAEGGTRCQ. Residues 1208 to 1248 form the EGF-like 13; calcium-binding domain; that stretch reads DVDECATTEPCLGGHCVNTEGSFNCLCETGFQPAPDSGECV. The EGF-like 15; calcium-binding domain occupies 1249–1290; it reads DIDECANDTVCGNHGFCDNTDGSFRCLCDQGFETSPSGWECV. Asn1255 is a glycosylation site (N-linked (GlcNAc...) asparagine). The EGF-like 16; calcium-binding domain occupies 1291–1333; that stretch reads DVNECELMLAVCGDALCENVEGSFLCLCASDLEEYDAEEGHCR. The TB 3 domain occupies 1357-1409; that stretch reads MECYAEHNGGPPCSQILGQNSTQAECCSTQGARWGETCDPCPSEDSVEFSELC. A glycan (N-linked (GlcNAc...) asparagine) is linked at Asn1376. The EGF-like 17; calcium-binding domain occupies 1431–1473; that stretch reads DADECILFGPALCQNGRCLNTVPGYICLCNPGYHYDAVSRKCQ. One can recognise an EGF-like 18; calcium-binding domain in the interval 1474–1513; it reads DHNECQDLACENGECVNTEGSFHCFCSPPLILDLSGQRCV. A glycan (N-linked (GlcNAc...) asparagine) is linked at Asn1514. Positions 1530–1582 constitute a TB 4 domain; that stretch reads DICWKKVTNDVCSQPLRGHHTTYTECCCQDGEAWSQQCALCPPRSSEVYAQLC. 10 disulfides stabilise this stretch: Cys1532–Cys1555, Cys1541–Cys1567, Cys1556–Cys1570, Cys1557–Cys1582, Cys1680–Cys1691, Cys1686–Cys1700, Cys1702–Cys1715, Cys1721–Cys1736, Cys1731–Cys1745, and Cys1747–Cys1760. Positions 1585–1764 are C-terminal domain; the sequence is ARIEAEREAG…PGPPHCAAKE (180 aa). The region spanning 1676–1716 is the EGF-like 19; calcium-binding domain; sequence QAEECGILNGCENGRCVRVREGYTCDCFEGFQLDTALMACV. The region spanning 1717–1761 is the EGF-like 20; calcium-binding domain; sequence DVNECEDLNGAARLCAHGHCENTEGSYRCHCSPGYVAEPGPPHCA.

This sequence belongs to the LTBP family. As to quaternary structure, forms part of the large latent transforming growth factor beta precursor complex; removal is essential for activation of complex. Interacts with SDC4. Interacts (via C-terminal domain) with FBN1 (via N-terminal domain) in a Ca(+2)-dependent manner. In terms of processing, N-Glycosylated. Post-translationally, contains hydroxylated asparagine residues. In terms of tissue distribution, expressed in cortical astrocytes and glioma cells. Expression is up-regulated by TGFB1.

The protein resides in the secreted. The protein localises to the extracellular space. Its subcellular location is the extracellular matrix. Functionally, may play an integral structural role in elastic-fiber architectural organization and/or assembly. The chain is Latent-transforming growth factor beta-binding protein 2 (Ltbp2) from Rattus norvegicus (Rat).